We begin with the raw amino-acid sequence, 104 residues long: Large ribosomal subunit protein bL21 (104 aa).

It belongs to the bacterial ribosomal protein bL21 family. As to quaternary structure, part of the 50S ribosomal subunit. Contacts protein L20.

In terms of biological role, this protein binds to 23S rRNA in the presence of protein L20. This chain is Large ribosomal subunit protein bL21, found in Elusimicrobium minutum (strain Pei191).